Here is a 274-residue protein sequence, read N- to C-terminus: 3-methyl-2-oxobutanoate hydroxymethyltransferase (274 aa).

Aspartate 49 and aspartate 88 together coordinate Mg(2+). Residues 49 to 50, aspartate 88, and lysine 118 contribute to the 3-methyl-2-oxobutanoate site; that span reads DS. Glutamate 120 is a binding site for Mg(2+). The active-site Proton acceptor is glutamate 187.

Belongs to the PanB family. In terms of assembly, homodecamer; pentamer of dimers. It depends on Mg(2+) as a cofactor.

Its subcellular location is the cytoplasm. The catalysed reaction is 3-methyl-2-oxobutanoate + (6R)-5,10-methylene-5,6,7,8-tetrahydrofolate + H2O = 2-dehydropantoate + (6S)-5,6,7,8-tetrahydrofolate. It participates in cofactor biosynthesis; (R)-pantothenate biosynthesis; (R)-pantoate from 3-methyl-2-oxobutanoate: step 1/2. Functionally, catalyzes the reversible reaction in which hydroxymethyl group from 5,10-methylenetetrahydrofolate is transferred onto alpha-ketoisovalerate to form ketopantoate. This is 3-methyl-2-oxobutanoate hydroxymethyltransferase from Rhodopseudomonas palustris (strain ATCC BAA-98 / CGA009).